The sequence spans 99 residues: Cobalt transport protein CbiN (99 aa).

The next 2 membrane-spanning stretches (helical) occupy residues 6-26 and 68-88; these read VLMI…YSGL and SLLF…FFGY.

This sequence belongs to the CbiN family. In terms of assembly, forms an energy-coupling factor (ECF) transporter complex composed of an ATP-binding protein (A component, CbiO), a transmembrane protein (T component, CbiQ) and 2 possible substrate-capture proteins (S components, CbiM and CbiN) of unknown stoichimetry.

The protein resides in the cell membrane. Its pathway is cofactor biosynthesis; adenosylcobalamin biosynthesis. Its function is as follows. Part of the energy-coupling factor (ECF) transporter complex CbiMNOQ involved in cobalt import. The chain is Cobalt transport protein CbiN from Methanococcus vannielii (strain ATCC 35089 / DSM 1224 / JCM 13029 / OCM 148 / SB).